Consider the following 639-residue polypeptide: Serine/threonine-protein phosphatase 2B catalytic subunit A1 (639 aa).

Residues D120, H122, and D148 each contribute to the Fe cation site. Residues D148 and N180 each contribute to the Zn(2+) site. The active-site Proton donor is the H181. H229 and H311 together coordinate Zn(2+). Residues 494 to 503 (KSDIENERLP) show a composition bias toward basic and acidic residues. The tract at residues 494-602 (KSDIENERLP…PSTRRRSLEN (109 aa)) is disordered. Composition is skewed to low complexity over residues 515–527 (ASPS…PATP) and 546–572 (TPIS…GGPP).

It belongs to the PPP phosphatase family. PP-2B subfamily. In terms of assembly, composed of two components (A and B), the A component is the catalytic subunit and the B component confers calcium sensitivity. It depends on Fe(3+) as a cofactor. Zn(2+) is required as a cofactor.

It carries out the reaction O-phospho-L-seryl-[protein] + H2O = L-seryl-[protein] + phosphate. The catalysed reaction is O-phospho-L-threonyl-[protein] + H2O = L-threonyl-[protein] + phosphate. Functionally, calcium-dependent, calmodulin-stimulated protein phosphatase. This subunit may have a role in the calmodulin activation of calcineurin. The chain is Serine/threonine-protein phosphatase 2B catalytic subunit A1 (CNA1) from Cryptococcus neoformans var. grubii serotype A (strain H99 / ATCC 208821 / CBS 10515 / FGSC 9487) (Filobasidiella neoformans var. grubii).